The following is a 484-amino-acid chain: Palmitoyltransferase ZDHHC1 (484 aa).

Polar residues-rich tracts occupy residues 1 to 11 and 19 to 34; these read MNICNKPSNKT and TAPSQDSGPSPELQGQ. A disordered region spans residues 1-38; sequence MNICNKPSNKTAPEKSVWTAPSQDSGPSPELQGQRSRR. Topologically, residues 1-49 are cytoplasmic; the sequence is MNICNKPSNKTAPEKSVWTAPSQDSGPSPELQGQRSRRNGWSWPPHPLQ. The tract at residues 1–268 is mediates interaction with STING1; that stretch reads MNICNKPSNK…GHLLCFHIYL (268 aa). The chain crosses the membrane as a helical span at residues 50–70; sequence IVAWLLYLFFAVIGFGVLVPL. Residues 71-74 are Lumenal-facing; it reads LPHH. A helical transmembrane segment spans residues 75–95; it reads WVPAGYACMGAIFAGHLVVHL. The Cytoplasmic portion of the chain corresponds to 96–182; that stretch reads TAVSIDPADA…YRLFLHSVAS (87 aa). The 51-residue stretch at 131–181 folds into the DHHC domain; the sequence is LHCNLCDVDVSARSKHCSACNKCVCGFDHHCKWLNNCVGERNYRLFLHSVA. Cys-161 (S-palmitoyl cysteine intermediate) is an active-site residue. A helical transmembrane segment spans residues 183–203; the sequence is ALLGVLLLVLVATYVFVEFFV. The Lumenal segment spans residues 204–238; it reads NPMRLRTNQHFEVLKNHTDVWFVFLPAAPVETQAP. The helical transmembrane segment at 239-259 threads the bilayer; it reads AILALAALLILLGLLSTALLG. Topologically, residues 260-484 are cytoplasmic; that stretch reads HLLCFHIYLM…GTPGGGDGLP (225 aa). Disordered stretches follow at residues 341–415 and 444–484; these read TQGQ…VHAG and LGAP…DGLP. A compositionally biased stretch (basic residues) spans 364 to 374; it reads PQKKRKRRVYR. The span at 380–392 shows a compositional bias: basic and acidic residues; it reads VLDRELPLPRLRE. Low complexity predominate over residues 395-415; it reads TPSRRSSSSSDSTSASPVHAG. The span at 475–484 shows a compositional bias: gly residues; it reads GTPGGGDGLP.

This sequence belongs to the DHHC palmitoyltransferase family. In terms of assembly, interacts with STING1; ZDHHC1 constitutively interacts with STING1 and in presence of DNA viruses activates it by promoting its cGAMP-induced oligomerization and the recruitment of downstream signaling components. In terms of tissue distribution, expressed at high levels in fetal lung and heart. Expressed at lower levels in fetal liver and brain. Also detected in adult islet cells of pancreas, Leydig cells of testis, retina and molecular layer of cerebellum.

The protein resides in the endosome membrane. It is found in the endoplasmic reticulum membrane. The protein localises to the golgi apparatus. The catalysed reaction is L-cysteinyl-[protein] + hexadecanoyl-CoA = S-hexadecanoyl-L-cysteinyl-[protein] + CoA. Functionally, palmitoyltransferase that catalyzes the addition of palmitate onto various protein substrates, such as NCDN and NLRP3. Has a palmitoyltransferase activity toward NCDN and regulates NCDN association with endosome membranes through this palmitoylation. Acts as an activator of the NLRP3 inflammasome by mediating palmitoylation of 'Cys-130' and 'Cys-958' of NLRP3, thereby promoting NLRP3 phosphorylation and activation by NEK7. In terms of biological role, also has a palmitoyltransferase activity-independent function in DNA virus-triggered and CGAS-mediated innate immune response. Functions as an activator of STING1 by promoting its cGAMP-induced oligomerization and the recruitment of downstream signaling components. This Mus musculus (Mouse) protein is Palmitoyltransferase ZDHHC1.